The following is a 125-amino-acid chain: Snaclec coagulation factor IX/factor X-binding protein subunit B (125 aa).

One can recognise a C-type lectin domain in the interval 1–122; that stretch reads DCSSGWTAYG…SLFGHFVCKS (122 aa). 3 disulfide bridges follow: Cys2/Cys13, Cys30/Cys120, and Cys97/Cys112. The Ca(2+) site is built by Ser41 and Glu47.

The protein belongs to the snaclec family. Heterodimer of subunits A and B; disulfide-linked. As to expression, expressed by the venom gland.

The protein resides in the secreted. Anticoagulant protein which binds to coagulation factor IX (F9) and coagulation factor X (F10) in the presence of calcium. It may bind the gamma-carboxyglutamic acid-domain regions of factors with a 1 to 1 stoichiometry. The dissociation constant (K(d)) are 6.6 nM for factor IX (F9) and 125 nM for factor X (F10). Does not bind carbohydrates. The sequence is that of Snaclec coagulation factor IX/factor X-binding protein subunit B from Echis carinatus (Saw-scaled viper).